The primary structure comprises 121 residues: MRNWRWLLLVLAVLLAWLQYRFWFGPGNSGEVMMLEAQVAHQTRDNEGLRQRNQALAAEVKDLKDGEAAIEERARSELGMIKPGETFYRVVEDAPLLPPAAQEAAPPAQPPAASADPVDHP.

Over 1–6 (MRNWRW) the chain is Cytoplasmic. A helical transmembrane segment spans residues 7–24 (LLLVLAVLLAWLQYRFWF). The Periplasmic portion of the chain corresponds to 25–121 (GPGNSGEVMM…AASADPVDHP (97 aa)). A coiled-coil region spans residues 31-66 (EVMMLEAQVAHQTRDNEGLRQRNQALAAEVKDLKDG). The interval 98–121 (PPAAQEAAPPAQPPAASADPVDHP) is disordered.

This sequence belongs to the FtsB family. Part of a complex composed of FtsB, FtsL and FtsQ.

Its subcellular location is the cell inner membrane. Essential cell division protein. May link together the upstream cell division proteins, which are predominantly cytoplasmic, with the downstream cell division proteins, which are predominantly periplasmic. The protein is Cell division protein FtsB of Xanthomonas campestris pv. campestris (strain 8004).